A 214-amino-acid chain; its full sequence is Large ribosomal subunit protein uL3 (214 aa).

A disordered region spans residues 119-159 (GVKRHGFAGGPKTHGQSDRHRAPGSIGPTTDPGRVHKGKRM).

Belongs to the universal ribosomal protein uL3 family. In terms of assembly, part of the 50S ribosomal subunit. Forms a cluster with proteins L14 and L19.

In terms of biological role, one of the primary rRNA binding proteins, it binds directly near the 3'-end of the 23S rRNA, where it nucleates assembly of the 50S subunit. This chain is Large ribosomal subunit protein uL3, found in Thermomicrobium roseum (strain ATCC 27502 / DSM 5159 / P-2).